The sequence spans 110 residues: Large ribosomal subunit protein uL22 (110 aa).

Belongs to the universal ribosomal protein uL22 family. Part of the 50S ribosomal subunit.

Functionally, this protein binds specifically to 23S rRNA; its binding is stimulated by other ribosomal proteins, e.g. L4, L17, and L20. It is important during the early stages of 50S assembly. It makes multiple contacts with different domains of the 23S rRNA in the assembled 50S subunit and ribosome. Its function is as follows. The globular domain of the protein is located near the polypeptide exit tunnel on the outside of the subunit, while an extended beta-hairpin is found that lines the wall of the exit tunnel in the center of the 70S ribosome. The polypeptide is Large ribosomal subunit protein uL22 (Hahella chejuensis (strain KCTC 2396)).